The primary structure comprises 237 residues: Uridylate kinase (237 aa).

11–14 (KLSG) lines the ATP pocket. G53 contributes to the UMP binding site. The ATP site is built by G54 and R58. UMP-binding positions include D73 and 134-141 (TGNPFFTT). Residues T161, Y167, and D170 each contribute to the ATP site.

The protein belongs to the UMP kinase family. In terms of assembly, homohexamer.

The protein resides in the cytoplasm. It carries out the reaction UMP + ATP = UDP + ADP. It participates in pyrimidine metabolism; CTP biosynthesis via de novo pathway; UDP from UMP (UMPK route): step 1/1. Inhibited by UTP. In terms of biological role, catalyzes the reversible phosphorylation of UMP to UDP. The chain is Uridylate kinase from Burkholderia thailandensis (strain ATCC 700388 / DSM 13276 / CCUG 48851 / CIP 106301 / E264).